The chain runs to 224 residues: Glycerol-3-phosphate acyltransferase (224 aa).

6 consecutive transmembrane segments (helical) span residues 14–34 (INMI…GWLL), 70–90 (YLSI…VLGA), 99–119 (TQWS…YLGF), 129–149 (IGSV…IWGI), 162–182 (LIGV…LPLP), and 185–205 (ISII…LFIF).

Belongs to the PlsY family. As to quaternary structure, probably interacts with PlsX.

Its subcellular location is the cell inner membrane. The catalysed reaction is an acyl phosphate + sn-glycerol 3-phosphate = a 1-acyl-sn-glycero-3-phosphate + phosphate. It participates in lipid metabolism; phospholipid metabolism. Functionally, catalyzes the transfer of an acyl group from acyl-phosphate (acyl-PO(4)) to glycerol-3-phosphate (G3P) to form lysophosphatidic acid (LPA). This enzyme utilizes acyl-phosphate as fatty acyl donor, but not acyl-CoA or acyl-ACP. This is Glycerol-3-phosphate acyltransferase from Helicobacter hepaticus (strain ATCC 51449 / 3B1).